We begin with the raw amino-acid sequence, 274 residues long: Energy-coupling factor transporter ATP-binding protein EcfA1 (274 aa).

The ABC transporter domain maps to 9 to 240 (CSFINVAFSY…EQELQKIRLD (232 aa)). An ATP-binding site is contributed by 41-48 (GHNGSGKS).

The protein belongs to the ABC transporter superfamily. Energy-coupling factor EcfA family. As to quaternary structure, forms a stable energy-coupling factor (ECF) transporter complex composed of 2 membrane-embedded substrate-binding proteins (S component), 2 ATP-binding proteins (A component) and 2 transmembrane proteins (T component).

The protein localises to the cell membrane. Functionally, ATP-binding (A) component of a common energy-coupling factor (ECF) ABC-transporter complex. Unlike classic ABC transporters this ECF transporter provides the energy necessary to transport a number of different substrates. In Mycoplasma genitalium (strain ATCC 33530 / DSM 19775 / NCTC 10195 / G37) (Mycoplasmoides genitalium), this protein is Energy-coupling factor transporter ATP-binding protein EcfA1.